Here is a 157-residue protein sequence, read N- to C-terminus: Tripartite terminase subunit 2 (157 aa).

Residues 1-69 form a disordered region; that stretch reads MSWAKQRVPF…DGEDGHALPD (69 aa). Residues 11-27 are compositionally biased toward acidic residues; it reads LDDDDGEEENDVQDDVD.

It belongs to the herpesviridae TRM2 protein family. In terms of assembly, associates with TRM1 and TRM3 to form the tripartite terminase complex.

The protein resides in the host nucleus. Its function is as follows. Component of the molecular motor that translocates viral genomic DNA in empty capsid during DNA packaging. Forms a tripartite terminase complex together with TRM1 and TRM3 in the host cytoplasm. Once the complex reaches the host nucleus, it interacts with the capsid portal vertex. This portal forms a ring in which genomic DNA is translocated into the capsid. This Homo sapiens (Human) protein is Tripartite terminase subunit 2.